The sequence spans 446 residues: Beta-glucosidase A (446 aa).

The active-site Proton donor is the Glu-166. Glu-351 acts as the Nucleophile in catalysis.

The protein belongs to the glycosyl hydrolase 1 family.

The catalysed reaction is Hydrolysis of terminal, non-reducing beta-D-glucosyl residues with release of beta-D-glucose.. It functions in the pathway glycan metabolism; cellulose degradation. The polypeptide is Beta-glucosidase A (bglA) (Thermotoga maritima (strain ATCC 43589 / DSM 3109 / JCM 10099 / NBRC 100826 / MSB8)).